The primary structure comprises 304 residues: tRNA-uridine aminocarboxypropyltransferase 1 (304 aa).

Position 2 is an N-acetylserine (Ser2). Residues 206-209 (DSTW) carry the DXTW motif.

It belongs to the TDD superfamily. DTWD1 family.

Its subcellular location is the nucleus. The catalysed reaction is a uridine in tRNA + S-adenosyl-L-methionine = a 3-[(3S)-3-amino-3-carboxypropyl]uridine in tRNA + S-methyl-5'-thioadenosine + H(+). Catalyzes the formation of 3-(3-amino-3-carboxypropyl)uridine (acp3U) at position 20 in the D-loop of several cytoplasmic tRNAs (acp3U(20)). The protein is tRNA-uridine aminocarboxypropyltransferase 1 of Pongo abelii (Sumatran orangutan).